Reading from the N-terminus, the 327-residue chain is Aspartate--ammonia ligase (327 aa).

Belongs to the class-II aminoacyl-tRNA synthetase family. AsnA subfamily.

It is found in the cytoplasm. It catalyses the reaction L-aspartate + NH4(+) + ATP = L-asparagine + AMP + diphosphate + H(+). Its pathway is amino-acid biosynthesis; L-asparagine biosynthesis; L-asparagine from L-aspartate (ammonia route): step 1/1. The chain is Aspartate--ammonia ligase from Bacillus cytotoxicus (strain DSM 22905 / CIP 110041 / 391-98 / NVH 391-98).